The chain runs to 167 residues: SsrA-binding protein (167 aa).

It belongs to the SmpB family.

The protein resides in the cytoplasm. In terms of biological role, required for rescue of stalled ribosomes mediated by trans-translation. Binds to transfer-messenger RNA (tmRNA), required for stable association of tmRNA with ribosomes. tmRNA and SmpB together mimic tRNA shape, replacing the anticodon stem-loop with SmpB. tmRNA is encoded by the ssrA gene; the 2 termini fold to resemble tRNA(Ala) and it encodes a 'tag peptide', a short internal open reading frame. During trans-translation Ala-aminoacylated tmRNA acts like a tRNA, entering the A-site of stalled ribosomes, displacing the stalled mRNA. The ribosome then switches to translate the ORF on the tmRNA; the nascent peptide is terminated with the 'tag peptide' encoded by the tmRNA and targeted for degradation. The ribosome is freed to recommence translation, which seems to be the essential function of trans-translation. The chain is SsrA-binding protein from Stenotrophomonas maltophilia (strain R551-3).